The sequence spans 619 residues: Leucine aminopeptidase 2 (619 aa).

A peptide contacts are provided by residues 141 to 143 (QCQ) and 273 to 278 (PYGGME). His-302 is a binding site for Zn(2+). Glu-303 functions as the Proton acceptor in the catalytic mechanism. Residues His-306 and Glu-325 each contribute to the Zn(2+) site. Tyr-390 acts as the Proton donor in catalysis.

The protein belongs to the peptidase M1 family. The cofactor is Zn(2+).

It localises to the cytoplasm. It is found in the nucleus. The enzyme catalyses an epoxide + H2O = an ethanediol. Functionally, aminopeptidase that preferentially cleaves di- and tripeptides. Also has low epoxide hydrolase activity (in vitro). Can hydrolyze the epoxide leukotriene LTA(4) but it forms preferentially 5,6-dihydroxy-7,9,11,14-eicosatetraenoic acid rather than the cytokine leukotriene B(4) as the product compared to the homologous mammalian enzyme (in vitro). The sequence is that of Leucine aminopeptidase 2 from Coccidioides immitis (strain RS) (Valley fever fungus).